The sequence spans 367 residues: Glutamate 5-kinase (367 aa).

Lys-9 contributes to the ATP binding site. Substrate is bound by residues Ser-49, Asp-136, and Asn-148. ATP contacts are provided by residues 168 to 169 and 210 to 216; these read TD and TGGMKSK. The region spanning 276-350 is the PUA domain; sequence SGQIEVDAGA…GMQSQDIQVR (75 aa).

It belongs to the glutamate 5-kinase family.

Its subcellular location is the cytoplasm. The catalysed reaction is L-glutamate + ATP = L-glutamyl 5-phosphate + ADP. The protein operates within amino-acid biosynthesis; L-proline biosynthesis; L-glutamate 5-semialdehyde from L-glutamate: step 1/2. Catalyzes the transfer of a phosphate group to glutamate to form L-glutamate 5-phosphate. This Bacillus cereus (strain G9842) protein is Glutamate 5-kinase.